Reading from the N-terminus, the 1235-residue chain is Structural maintenance of chromosomes protein 1B (1235 aa).

Residue 32–39 (GPNGSGKS) coordinates ATP. Residues 156 to 490 (EEISTSGELI…RSELQNAGID (335 aa)) are a coiled coil. An SMC hinge domain is found at 514 to 629 (SVFGRLFDLC…ETMEEARHIA (116 aa)). Lysine 648 and lysine 713 each carry N6-acetyllysine. Coiled-coil stretches lie at residues 666–934 (WDEK…LDCK), 970–994 (EKEE…SDQE), and 1022–1049 (RALE…KEAR). Lysine 1033 bears the N6-acetyllysine mark.

The protein belongs to the SMC family. SMC1 subfamily. In terms of assembly, forms a heterodimer with SMC3. Component of a meiosis-specific cohesin complex, probably composed of the SMC1B and SMC3 heterodimer attached via their SMC hinge domain, RAD21 (or its meiosis-specific related protein REC8), which link them, and STAG3, which interacts with RAD21 or REC8. The cohesin complex interacts with the cohesin loading complex subunits NIPBL/Scc2 (via HEAT repeats) and MAU2/Scc4. NIPBL directly contacts all members of the complex, RAD21, SMC1A/B, SMC3 and STAG1.

The protein resides in the nucleus. It localises to the chromosome. It is found in the centromere. In terms of biological role, meiosis-specific component of cohesin complex. Required for the maintenance of meiotic cohesion, but not, or only to a minor extent, for its establishment. Contributes to axial element (AE) formation and the organization of chromatin loops along the AE. Plays a key role in synapsis, recombination and chromosome movements. The cohesin complex is required for the cohesion of sister chromatids after DNA replication. The cohesin complex apparently forms a large proteinaceous ring within which sister chromatids can be trapped. At anaphase, the complex is cleaved and dissociates from chromatin, allowing sister chromatids to segregate. The meiosis-specific cohesin complex probably replaces mitosis specific cohesin complex when it dissociates from chromatin during prophase I. This chain is Structural maintenance of chromosomes protein 1B (SMC1B), found in Homo sapiens (Human).